The following is a 574-amino-acid chain: Peptidyl-prolyl cis-trans isomerase FKBP9 (574 aa).

Residues 1–26 (MAIRARSWRPPPPPLLLLLLWVTGQA) form the signal peptide. PPIase FKBP-type domains lie at 58 to 146 (GDFV…MDIW), 170 to 258 (SDFV…LDLH), 282 to 369 (GDFL…IDFH), and 393 to 481 (GDYL…LELV). N-linked (GlcNAc...) asparagine glycosylation is found at N178, N290, N306, and N401. EF-hand domains are found at residues 492 to 527 (WNGEVSANLFEEIDKDGDGEVLLEEFSEYIHAQVAS) and 537 to 572 (DAEMIVKNMFTNQDRNGDGKVTAEEFKLKDQETKHD). Residues D505, D507, D509, E511, E516, D550, N552, D554, K556, and E561 each coordinate Ca(2+). The short motif at 571–574 (HDEL) is the Prevents secretion from ER element.

In terms of processing, phosphorylated.

It is found in the endoplasmic reticulum. It carries out the reaction [protein]-peptidylproline (omega=180) = [protein]-peptidylproline (omega=0). Inhibited by FK506. PPIases accelerate the folding of proteins during protein synthesis. The chain is Peptidyl-prolyl cis-trans isomerase FKBP9 (FKBP9) from Bos taurus (Bovine).